The chain runs to 1251 residues: MEDVGVNNDTVHPEARAYITSLVSALGGYGVDDDGGYTLGDDALEVLRDLKRWVRFYDERTNRMDVARCLAESNLVTSDLLQIMAKWVSNESSSKYMERIAFACLEIMVPLTWPIERDSETMTVNHHRHLPVLQLAQLGYKRAIINFDVAPILSTAVRIALPCMAIPNGDRSSRDQATIKLILYFLRNIAMIAPPPGLKYEGDETQVSRSTLIDAFTFQDIFLTILTIASNMGEDFRTEDVIILDIIFHIVKRVDSSKLFVSEKRLHKIKEDELTAAMRKEAAMLKSYNKNAPTRHSRFGTMIWVKRESGKLATVSGQDALLDAATRERKMDSNKSFKPPRRARKEDMEPKDLGPRVSLDERARRQLQSFVSEFLDSGFNPLFSHVRRSLDREAPHVLQSHHSQFFYLVAWFLEAERMRKKAAKDSKNQTSTGEDVGSFNLVAEVLNQEMFITMSRTLDRAYGDKDWRLLTTVMRCFTQILLTIQEMASSGNEENEEIADNILSRLFYEETTHDLIANIVRTYKDQGFEYLDACTELTHTFVRILEAYSKENVDLQVRSRKRTRRKKKAAKAAGDQGDDEGQGDAEDDSADDERQAEKTSQERKFDFKRFALRFAPQGVVDTFVTFTKYYRDLDDSQLKRAHRYFFKLAFKQDMSVMLFRLDIIHLFYNMIKGPEPLDKSSSMYKEWEDLAMQTIRKCVKKLEERPALFTELLFSKITSTAHYLEYGHEKQTISNPRPAAELEFKREVEREQQIAILVGVLIDRSQTDHLGWIKKQLSDAESERRAWENAERALAAERPDDEVMAGSAEAIAAKTPDHVTMRPDTDARRTAMFKNPHLRLLMKLVGLERLAPTLDETPDAIWIIPGTLTADALKETISLINKAEFTPPIFDDGELAEDQLRRKTAPRKRAAYDDDDNLDGINDLINDGSDDDGDDGTGILFPAGGPTARKRTAQDEPPKKRLQRRRRRGGSDDPDADTAETDAQAEARARARRKKELEKARKIKSEMYVDPREDDSDYEGNKERDRLFFAREEERQAVKDATFGLSSRPEGVGEGAWEALVGAVMGGGDGDDGEGEDAVVGERPPKVGGRKRKSGVADLAESGGEDSEEGDEDDESRSEEDGSAVSEAEAPAAAGRRPNKRRKPAQKKKKRVVDISSGEDDDVGMDMDVDVDADADADAMDFTQSSKDGAVTNDTPLSSDPSRTTKPGGAEGSGDKGGGEDEDEDMPVAKPVARARPRARAGFIVESSDEE.

Disordered regions lie at residues 328–354 (ERKMDSNKSFKPPRRARKEDMEPKDLG), 564–601 (RRKKKAAKAAGDQGDDEGQGDAEDDSADDERQAEKTSQ), 901–1021 (RRKT…YEGN), and 1041–1251 (ATFG…SDEE). Residues 344–354 (RKEDMEPKDLG) show a composition bias toward basic and acidic residues. Residues 576 to 591 (QGDDEGQGDAEDDSAD) show a composition bias toward acidic residues. Composition is skewed to basic and acidic residues over residues 592–601 (DERQAEKTSQ) and 985–1011 (AEARARARRKKELEKARKIKSEMYVDP). Acidic residues-rich tracts occupy residues 1069–1079 (DGDDGEGEDAV) and 1103–1122 (GGEDSEEGDEDDESRSEEDG). Residues 1123–1136 (SAVSEAEAPAAAGR) show a composition bias toward low complexity. Basic residues predominate over residues 1137–1151 (RPNKRRKPAQKKKKR). Acidic residues predominate over residues 1157–1179 (SGEDDDVGMDMDVDVDADADADA). Residues 1182–1205 (FTQSSKDGAVTNDTPLSSDPSRTT) show a composition bias toward polar residues.

This sequence belongs to the timeless family. In terms of assembly, component of the fork protection complex (FPC) consisting of TOF1 and CSM3.

Its subcellular location is the nucleus. Functionally, forms a fork protection complex (FPC) with CSM3 and which is required for chromosome segregation during meiosis and DNA damage repair. FPC coordinates leading and lagging strand synthesis and moves with the replication fork. FPC stabilizes replication forks in a configuration that is recognized by replication checkpoint sensors. The chain is Topoisomerase 1-associated factor 1 (TOF1) from Chaetomium globosum (strain ATCC 6205 / CBS 148.51 / DSM 1962 / NBRC 6347 / NRRL 1970) (Soil fungus).